Consider the following 154-residue polypeptide: D-aminoacyl-tRNA deacylase (154 aa).

The Gly-cisPro motif, important for rejection of L-amino acids signature appears at 142 to 143 (GP).

Belongs to the DTD family. In terms of assembly, homodimer.

The protein localises to the cytoplasm. The catalysed reaction is glycyl-tRNA(Ala) + H2O = tRNA(Ala) + glycine + H(+). The enzyme catalyses a D-aminoacyl-tRNA + H2O = a tRNA + a D-alpha-amino acid + H(+). An aminoacyl-tRNA editing enzyme that deacylates mischarged D-aminoacyl-tRNAs. Also deacylates mischarged glycyl-tRNA(Ala), protecting cells against glycine mischarging by AlaRS. Acts via tRNA-based rather than protein-based catalysis; rejects L-amino acids rather than detecting D-amino acids in the active site. By recycling D-aminoacyl-tRNA to D-amino acids and free tRNA molecules, this enzyme counteracts the toxicity associated with the formation of D-aminoacyl-tRNA entities in vivo and helps enforce protein L-homochirality. This chain is D-aminoacyl-tRNA deacylase (DTD1), found in Yarrowia lipolytica (strain CLIB 122 / E 150) (Yeast).